A 557-amino-acid chain; its full sequence is Potassium-transporting ATPase potassium-binding subunit (557 aa).

The next 12 membrane-spanning stretches (helical) occupy residues 5–25 (GFLLIATFLLVLMVLARPLGS), 63–83 (LCAILGLNMLGLAVLFFMLLG), 132–152 (GLTVQNFLSAASGIAVIFALI), 170–190 (LLRITLWVLAPVALLIALFFI), 253–273 (FVQMLAIFLIPTALCFAFGEV), 283–303 (LLWAMSVIFVICVGVVMWAEV), 329–349 (VLVSSLFAVVTTAASCGAVIA), 356–376 (ALGGMVPMWLMQIGEVVFGGV), 379–399 (GLYGMMLFVLLAVFIAGLMIG), 416–436 (LTALAILVTPTLVLMGAALAM), 484–504 (LLALCMFVGRFGVIIPVMAIA), and 526–546 (LFVGLLIGTVLLVGALTFIPA).

Belongs to the KdpA family. As to quaternary structure, the system is composed of three essential subunits: KdpA, KdpB and KdpC.

The protein resides in the cell inner membrane. In terms of biological role, part of the high-affinity ATP-driven potassium transport (or Kdp) system, which catalyzes the hydrolysis of ATP coupled with the electrogenic transport of potassium into the cytoplasm. This subunit binds the periplasmic potassium ions and delivers the ions to the membrane domain of KdpB through an intramembrane tunnel. This Escherichia coli O81 (strain ED1a) protein is Potassium-transporting ATPase potassium-binding subunit.